A 460-amino-acid polypeptide reads, in one-letter code: Pentatricopeptide repeat-containing protein At5g43790 (460 aa).

PPR repeat units lie at residues 70-107 (SVFL…RSNF), 111-142 (NEFT…VLKF), 149-179 (DRFV…IREP), 180-214 (DLAT…QVRP), 215-249 (NELS…NLTL), 250-280 (NQFV…MSQR), 281-315 (DVSC…GLVP), 316-351 (DSAT…GIEP), and 352-382 (KVEH…MPVK). The interval 387 to 460 (LWRSFLGSSQ…NKSPGISTLN (74 aa)) is type E motif; degenerate.

It belongs to the PPR family. PCMP-E subfamily.

This is Pentatricopeptide repeat-containing protein At5g43790 (PCMP-E30) from Arabidopsis thaliana (Mouse-ear cress).